A 150-amino-acid polypeptide reads, in one-letter code: Large ribosomal subunit protein uL15 (150 aa).

It belongs to the universal ribosomal protein uL15 family. Part of the 50S ribosomal subunit.

In terms of biological role, binds to the 23S rRNA. The polypeptide is Large ribosomal subunit protein uL15 (Rickettsia prowazekii (strain Madrid E)).